Consider the following 676-residue polypeptide: DNA ligase (676 aa).

The span at 1–10 (MTQAHHDDAG) shows a compositional bias: basic and acidic residues. The interval 1–23 (MTQAHHDDAGARNALQGGLATDP) is disordered. NAD(+)-binding positions include 52 to 56 (DAAFD) and 95 to 96 (SL). Lys-148 serves as the catalytic N6-AMP-lysine intermediate. Residues Arg-169, Glu-203, and Lys-330 each contribute to the NAD(+) site. Residues Cys-420, Cys-423, Cys-436, and Cys-441 each contribute to the Zn(2+) site. One can recognise a BRCT domain in the interval 593–676 (EAEGPLAGLT…DKLIAERRGG (84 aa)).

It belongs to the NAD-dependent DNA ligase family. LigA subfamily. The cofactor is Mg(2+). Mn(2+) serves as cofactor.

It carries out the reaction NAD(+) + (deoxyribonucleotide)n-3'-hydroxyl + 5'-phospho-(deoxyribonucleotide)m = (deoxyribonucleotide)n+m + AMP + beta-nicotinamide D-nucleotide.. DNA ligase that catalyzes the formation of phosphodiester linkages between 5'-phosphoryl and 3'-hydroxyl groups in double-stranded DNA using NAD as a coenzyme and as the energy source for the reaction. It is essential for DNA replication and repair of damaged DNA. This chain is DNA ligase, found in Sorangium cellulosum (strain So ce56) (Polyangium cellulosum (strain So ce56)).